The primary structure comprises 697 residues: Putative flagellar export/assembly protein LfhA (697 aa).

Transmembrane regions (helical) follow at residues V19–L39, D40–A60, F66–A86, G116–V136, A204–F224, I242–I262, and L280–G302.

It belongs to the FHIPEP (flagella/HR/invasion proteins export pore) family.

It localises to the cell inner membrane. Functionally, part of the flagellar gene cluster Flag-2. However, the Flag-2 flagellar system could be inactive in strain 042 due to a frameshift in lfgC. In Escherichia coli O44:H18 (strain 042 / EAEC), this protein is Putative flagellar export/assembly protein LfhA.